Consider the following 377-residue polypeptide: Flagellar P-ring protein (377 aa).

The signal sequence occupies residues 1-33; sequence MRYPVSTGIAAPAWFAFFCAWAGLWTFSLPVQA.

This sequence belongs to the FlgI family. In terms of assembly, the basal body constitutes a major portion of the flagellar organelle and consists of four rings (L,P,S, and M) mounted on a central rod.

Its subcellular location is the periplasm. It localises to the bacterial flagellum basal body. Functionally, assembles around the rod to form the L-ring and probably protects the motor/basal body from shearing forces during rotation. In Nitrosospira multiformis (strain ATCC 25196 / NCIMB 11849 / C 71), this protein is Flagellar P-ring protein.